Consider the following 120-residue polypeptide: Large ribosomal subunit protein uL18 (120 aa).

This sequence belongs to the universal ribosomal protein uL18 family. In terms of assembly, part of the 50S ribosomal subunit; part of the 5S rRNA/L5/L18/L25 subcomplex. Contacts the 5S and 23S rRNAs.

In terms of biological role, this is one of the proteins that bind and probably mediate the attachment of the 5S RNA into the large ribosomal subunit, where it forms part of the central protuberance. This is Large ribosomal subunit protein uL18 from Chloroherpeton thalassium (strain ATCC 35110 / GB-78).